The primary structure comprises 288 residues: Phosphatidylserine decarboxylase proenzyme (288 aa).

Catalysis depends on charge relay system; for autoendoproteolytic cleavage activity residues aspartate 90, histidine 147, and serine 252. Serine 252 acts as the Schiff-base intermediate with substrate; via pyruvic acid; for decarboxylase activity in catalysis. The residue at position 252 (serine 252) is a Pyruvic acid (Ser); by autocatalysis.

Belongs to the phosphatidylserine decarboxylase family. PSD-B subfamily. Prokaryotic type I sub-subfamily. Heterodimer of a large membrane-associated beta subunit and a small pyruvoyl-containing alpha subunit. It depends on pyruvate as a cofactor. In terms of processing, is synthesized initially as an inactive proenzyme. Formation of the active enzyme involves a self-maturation process in which the active site pyruvoyl group is generated from an internal serine residue via an autocatalytic post-translational modification. Two non-identical subunits are generated from the proenzyme in this reaction, and the pyruvate is formed at the N-terminus of the alpha chain, which is derived from the carboxyl end of the proenzyme. The autoendoproteolytic cleavage occurs by a canonical serine protease mechanism, in which the side chain hydroxyl group of the serine supplies its oxygen atom to form the C-terminus of the beta chain, while the remainder of the serine residue undergoes an oxidative deamination to produce ammonia and the pyruvoyl prosthetic group on the alpha chain. During this reaction, the Ser that is part of the protease active site of the proenzyme becomes the pyruvoyl prosthetic group, which constitutes an essential element of the active site of the mature decarboxylase.

Its subcellular location is the cell membrane. The enzyme catalyses a 1,2-diacyl-sn-glycero-3-phospho-L-serine + H(+) = a 1,2-diacyl-sn-glycero-3-phosphoethanolamine + CO2. It participates in phospholipid metabolism; phosphatidylethanolamine biosynthesis; phosphatidylethanolamine from CDP-diacylglycerol: step 2/2. Its function is as follows. Catalyzes the formation of phosphatidylethanolamine (PtdEtn) from phosphatidylserine (PtdSer). This chain is Phosphatidylserine decarboxylase proenzyme, found in Pseudomonas fluorescens (strain ATCC BAA-477 / NRRL B-23932 / Pf-5).